The following is a 119-amino-acid chain: uncharacterized protein (119 aa).

Residues 55 to 119 (LSTEPPTPPS…SRLPPRSWTN (65 aa)) are disordered. The segment covering 81-92 (LSYTRCHSTTYT) has biased composition (polar residues).

This is an uncharacterized protein from Saccharomyces cerevisiae (strain ATCC 204508 / S288c) (Baker's yeast).